The chain runs to 442 residues: C4-dicarboxylate transport protein 2 (442 aa).

9 consecutive transmembrane segments (helical) span residues 20–39, 52–74, 89–111, 141–158, 162–179, 200–221, 231–253, 342–364, and 368–387; these read QLYVQVLVAITVGILLGHYY, AFIKLVKMIIAPVIFLTVATGIA, AMLYFLTFSTLALIIGLVVANVV, VTGFLMNIIPGTIVGAFA, ILQVLFFSVLFGIALALV, LVSVLMKAAPIGAFGAMAFTIG, LAMLVGTFYATSLLFVFVVLGAV, ILLLLVAMLSSKGAAGITGAGFI, and ATLSVVPSVPVAGMALILGV.

The protein belongs to the dicarboxylate/amino acid:cation symporter (DAACS) (TC 2.A.23) family.

The protein resides in the cell inner membrane. Its function is as follows. Responsible for the transport of dicarboxylates such as succinate, fumarate, and malate from the periplasm across the membrane. This transport system plays an important role in the energy supply of rhizobium-legume symbionts. The sequence is that of C4-dicarboxylate transport protein 2 (dctA2) from Mesorhizobium japonicum (strain LMG 29417 / CECT 9101 / MAFF 303099) (Mesorhizobium loti (strain MAFF 303099)).